A 207-amino-acid polypeptide reads, in one-letter code: Alpha/beta-tubulin-N-acetyltransferase 9 (207 aa).

An N-acetyltransferase domain is found at 35-180; it reads EELQRLTASE…QEVTLRLTVS (146 aa).

It belongs to the acetyltransferase family. GNAT subfamily.

The catalysed reaction is N-terminal L-methionyl-[tubulin] + acetyl-CoA = N-terminal N(alpha)-acetyl-L-methionyl-[tubulin] + CoA + H(+). Its function is as follows. N-acetyltransferase that mediates the acetylation of the N-terminal residues of alpha- and beta-tubulin. This is Alpha/beta-tubulin-N-acetyltransferase 9 (NAT9) from Homo sapiens (Human).